The sequence spans 568 residues: Sulfite reductase [NADPH] hemoprotein beta-component (568 aa).

Residues Cys-425, Cys-431, Cys-470, and Cys-474 each contribute to the [4Fe-4S] cluster site. Residue Cys-474 coordinates siroheme.

Belongs to the nitrite and sulfite reductase 4Fe-4S domain family. Alpha(8)-beta(8). The alpha component is a flavoprotein, the beta component is a hemoprotein. The cofactor is siroheme. It depends on [4Fe-4S] cluster as a cofactor.

It catalyses the reaction hydrogen sulfide + 3 NADP(+) + 3 H2O = sulfite + 3 NADPH + 4 H(+). It participates in sulfur metabolism; hydrogen sulfide biosynthesis; hydrogen sulfide from sulfite (NADPH route): step 1/1. In terms of biological role, component of the sulfite reductase complex that catalyzes the 6-electron reduction of sulfite to sulfide. This is one of several activities required for the biosynthesis of L-cysteine from sulfate. This Xanthomonas oryzae pv. oryzae (strain MAFF 311018) protein is Sulfite reductase [NADPH] hemoprotein beta-component.